The chain runs to 455 residues: tRNA modification GTPase MnmE (455 aa).

(6S)-5-formyl-5,6,7,8-tetrahydrofolate is bound by residues R26, E86, and R125. A TrmE-type G domain is found at 222–376 (GLKTAIIGRP…VEEKINQIFF (155 aa)). K(+) is bound at residue N232. GTP contacts are provided by residues 232 to 237 (NVGKSS), 251 to 257 (TDIAGTT), and 276 to 279 (DTAG). S236 provides a ligand contact to Mg(2+). K(+) contacts are provided by T251, I253, and T256. T257 is a binding site for Mg(2+). Residue K455 coordinates (6S)-5-formyl-5,6,7,8-tetrahydrofolate.

This sequence belongs to the TRAFAC class TrmE-Era-EngA-EngB-Septin-like GTPase superfamily. TrmE GTPase family. In terms of assembly, homodimer. Heterotetramer of two MnmE and two MnmG subunits. K(+) is required as a cofactor.

Its subcellular location is the cytoplasm. Exhibits a very high intrinsic GTPase hydrolysis rate. Involved in the addition of a carboxymethylaminomethyl (cmnm) group at the wobble position (U34) of certain tRNAs, forming tRNA-cmnm(5)s(2)U34. This is tRNA modification GTPase MnmE from Lactococcus lactis subsp. lactis (strain IL1403) (Streptococcus lactis).